Here is a 395-residue protein sequence, read N- to C-terminus: Choline/ethanolamine kinase (395 aa).

Ala2 is subject to N-acetylalanine. Residues 75–81 (SGGLSNL), Arg104, 146–152 (QYIPSRP), Gln244, and Asp264 contribute to the ATP site. Phosphocholine is bound at residue 77–79 (GLS).

It belongs to the choline/ethanolamine kinase family. Homodimer, and heterodimer with CHKA.

The enzyme catalyses choline + ATP = phosphocholine + ADP + H(+). It carries out the reaction ethanolamine + ATP = phosphoethanolamine + ADP + H(+). The protein operates within phospholipid metabolism; phosphatidylethanolamine biosynthesis; phosphatidylethanolamine from ethanolamine: step 1/3. Has a key role in phospholipid metabolism, and catalyzes the first step of phosphatidylethanolamine and phosphatidylcholine biosynthesis. The polypeptide is Choline/ethanolamine kinase (CHKB) (Homo sapiens (Human)).